The following is a 156-amino-acid chain: Crossover junction endodeoxyribonuclease RuvC (156 aa).

Catalysis depends on residues Asp7, Glu67, and Asp140. Asp7, Glu67, and Asp140 together coordinate Mg(2+).

Belongs to the RuvC family. In terms of assembly, homodimer which binds Holliday junction (HJ) DNA. The HJ becomes 2-fold symmetrical on binding to RuvC with unstacked arms; it has a different conformation from HJ DNA in complex with RuvA. In the full resolvosome a probable DNA-RuvA(4)-RuvB(12)-RuvC(2) complex forms which resolves the HJ. Requires Mg(2+) as cofactor.

It is found in the cytoplasm. The enzyme catalyses Endonucleolytic cleavage at a junction such as a reciprocal single-stranded crossover between two homologous DNA duplexes (Holliday junction).. Its function is as follows. The RuvA-RuvB-RuvC complex processes Holliday junction (HJ) DNA during genetic recombination and DNA repair. Endonuclease that resolves HJ intermediates. Cleaves cruciform DNA by making single-stranded nicks across the HJ at symmetrical positions within the homologous arms, yielding a 5'-phosphate and a 3'-hydroxyl group; requires a central core of homology in the junction. The consensus cleavage sequence is 5'-(A/T)TT(C/G)-3'. Cleavage occurs on the 3'-side of the TT dinucleotide at the point of strand exchange. HJ branch migration catalyzed by RuvA-RuvB allows RuvC to scan DNA until it finds its consensus sequence, where it cleaves and resolves the cruciform DNA. In Rickettsia felis (strain ATCC VR-1525 / URRWXCal2) (Rickettsia azadi), this protein is Crossover junction endodeoxyribonuclease RuvC.